The primary structure comprises 291 residues: Homoserine kinase (291 aa).

Proline 79–alanine 89 provides a ligand contact to ATP.

It belongs to the GHMP kinase family. Homoserine kinase subfamily.

Its subcellular location is the cytoplasm. It carries out the reaction L-homoserine + ATP = O-phospho-L-homoserine + ADP + H(+). It participates in amino-acid biosynthesis; L-threonine biosynthesis; L-threonine from L-aspartate: step 4/5. In terms of biological role, catalyzes the ATP-dependent phosphorylation of L-homoserine to L-homoserine phosphate. The sequence is that of Homoserine kinase from Leuconostoc citreum (strain KM20).